Here is a 365-residue protein sequence, read N- to C-terminus: S-adenosylmethionine:tRNA ribosyltransferase-isomerase (365 aa).

Belongs to the QueA family. Monomer.

Its subcellular location is the cytoplasm. It catalyses the reaction 7-aminomethyl-7-carbaguanosine(34) in tRNA + S-adenosyl-L-methionine = epoxyqueuosine(34) in tRNA + adenine + L-methionine + 2 H(+). It functions in the pathway tRNA modification; tRNA-queuosine biosynthesis. Transfers and isomerizes the ribose moiety from AdoMet to the 7-aminomethyl group of 7-deazaguanine (preQ1-tRNA) to give epoxyqueuosine (oQ-tRNA). This is S-adenosylmethionine:tRNA ribosyltransferase-isomerase from Rickettsia africae (strain ESF-5).